A 145-amino-acid polypeptide reads, in one-letter code: Superoxide dismutase [Mn/Fe] (145 aa).

The Fe(3+) site is built by His-10 and His-64. 2 residues coordinate Mn(2+): His-10 and His-64.

It belongs to the iron/manganese superoxide dismutase family. Mn(2+) serves as cofactor. Requires Fe(3+) as cofactor.

The catalysed reaction is 2 superoxide + 2 H(+) = H2O2 + O2. Its function is as follows. Destroys superoxide anion radicals which are normally produced within the cells and which are toxic to biological systems. Catalyzes the dismutation of superoxide anion radicals into O2 and H2O2 by successive reduction and oxidation of the transition metal ion at the active site. The chain is Superoxide dismutase [Mn/Fe] (sodA) from Streptococcus iniae (Streptococcus shiloi).